A 158-amino-acid polypeptide reads, in one-letter code: Transcriptional repressor NrdR (158 aa).

The segment at 3-34 (CPSCQNTDSRVLESRAADAGRSVRRRRECLHC) is a zinc-finger region. Residues 49 to 139 (ITVLKRNGNR…VYRHFRGIND (91 aa)) form the ATP-cone domain.

It belongs to the NrdR family. It depends on Zn(2+) as a cofactor.

Its function is as follows. Negatively regulates transcription of bacterial ribonucleotide reductase nrd genes and operons by binding to NrdR-boxes. The polypeptide is Transcriptional repressor NrdR (Prochlorococcus marinus (strain MIT 9303)).